A 1185-amino-acid polypeptide reads, in one-letter code: Syntaxin-binding protein 5-like (1185 aa).

Met-1 carries the post-translational modification N-acetylmethionine. The segment at Ala-15–Leu-44 is disordered. Positions Ser-16–Ser-26 are enriched in low complexity. 10 WD repeats span residues Thr-73–Gln-106, Val-113–Phe-152, Ile-157–Ile-193, His-212–Val-246, Ile-252–Pro-284, Pro-306–Thr-348, Ile-356–Leu-390, Thr-412–Lys-489, Gln-517–Ile-628, and Thr-642–Asn-704. Phosphothreonine is present on Thr-567. The disordered stretch occupies residues Thr-567 to Val-601. Ser-573, Ser-588, and Ser-592 each carry phosphoserine. The span at Asp-578–Ser-592 shows a compositional bias: low complexity. Residue Thr-595 is modified to Phosphothreonine. Ser-598 bears the Phosphoserine mark. Omega-N-methylarginine is present on Arg-708. Positions Thr-747–Arg-768 are enriched in polar residues. Residues Thr-747–Ser-770 form a disordered region. Ser-762, Ser-764, Ser-765, Ser-770, Ser-771, Ser-792, Ser-799, Ser-811, Ser-819, Ser-821, and Ser-822 each carry phosphoserine. WD repeat units lie at residues Ile-831–Phe-888, Thr-897–Leu-968, Ile-973–Asn-1017, and Cys-1031–Gln-1054. Thr-1092 carries the phosphothreonine modification. Residues Ser-1120–Lys-1180 form the v-SNARE coiled-coil homology domain.

It belongs to the WD repeat L(2)GL family. As to quaternary structure, interacts with STX1A and STX4. Phosphorylated, leading to STXBP5L increased turnover and subsequent de-repression of insulin secretion. Phosphorylated on serine residues in response to glucose or phorbol esters. In terms of processing, ubiquitinated by the E3 ligase SYVN1, leading to STXBP5L proteasomal degradation. In terms of tissue distribution, detected in hippocampus and cerebellum. Expressed in pancreatic beta-cells where it modulates insulin secretion.

It localises to the cytoplasm. It is found in the cell membrane. The protein resides in the membrane. Its function is as follows. Plays a role in vesicle trafficking and exocytosis inhibition. In pancreatic beta-cells, inhibits insulin secretion probably by interacting with and regulating STX1A and STX4, key t-SNARE proteins involved in the fusion of insulin granules to the plasma membrane. Also plays a role in neurotransmitter release by inhibiting basal acetylcholine release from axon terminals and by preventing synaptic fatigue upon repetitive stimulation. Promotes as well axonal outgrowth. The protein is Syntaxin-binding protein 5-like (Stxbp5l) of Mus musculus (Mouse).